The following is a 394-amino-acid chain: Large ribosomal subunit protein bL27m (394 aa).

The N-terminal 34 residues, 1 to 34 (MSFIKQVGKLIRPNDYSSSIFQTSFLNNVIQVRT), are a transit peptide targeting the mitochondrion. Disordered stretches follow at residues 36-57 (TKRA…LGPK) and 145-181 (AEAE…QRAS). Residues 145–170 (AEAEKEENHMSRKEFLQQPELEKTRQ) are compositionally biased toward basic and acidic residues.

Belongs to the bacterial ribosomal protein bL27 family.

The protein resides in the mitochondrion. Its function is as follows. Component of the large subunit of mitochondrial ribosome. The protein is Large ribosomal subunit protein bL27m (MRPL2) of Debaryomyces hansenii (strain ATCC 36239 / CBS 767 / BCRC 21394 / JCM 1990 / NBRC 0083 / IGC 2968) (Yeast).